The sequence spans 487 residues: UDP-N-acetylmuramoyl-L-alanyl-D-glutamate--2,6-diaminopimelate ligase (487 aa).

Ser-30 is a binding site for UDP-N-acetyl-alpha-D-muramoyl-L-alanyl-D-glutamate. 109–115 serves as a coordination point for ATP; sequence GTNGKTS. Residues 151–152, Ser-178, and Arg-186 contribute to the UDP-N-acetyl-alpha-D-muramoyl-L-alanyl-D-glutamate site; that span reads TT. Lys-218 carries the post-translational modification N6-carboxylysine. Meso-2,6-diaminopimelate is bound by residues Arg-379, 403–406, Gly-455, and Glu-459; that span reads DNPR. Positions 403–406 match the Meso-diaminopimelate recognition motif motif; the sequence is DNPR.

This sequence belongs to the MurCDEF family. MurE subfamily. Requires Mg(2+) as cofactor. In terms of processing, carboxylation is probably crucial for Mg(2+) binding and, consequently, for the gamma-phosphate positioning of ATP.

The protein resides in the cytoplasm. The catalysed reaction is UDP-N-acetyl-alpha-D-muramoyl-L-alanyl-D-glutamate + meso-2,6-diaminopimelate + ATP = UDP-N-acetyl-alpha-D-muramoyl-L-alanyl-gamma-D-glutamyl-meso-2,6-diaminopimelate + ADP + phosphate + H(+). The protein operates within cell wall biogenesis; peptidoglycan biosynthesis. Catalyzes the addition of meso-diaminopimelic acid to the nucleotide precursor UDP-N-acetylmuramoyl-L-alanyl-D-glutamate (UMAG) in the biosynthesis of bacterial cell-wall peptidoglycan. In Alkaliphilus oremlandii (strain OhILAs) (Clostridium oremlandii (strain OhILAs)), this protein is UDP-N-acetylmuramoyl-L-alanyl-D-glutamate--2,6-diaminopimelate ligase.